The chain runs to 245 residues: 1-(5-phosphoribosyl)-5-[(5-phosphoribosylamino)methylideneamino] imidazole-4-carboxamide isomerase (245 aa).

The active-site Proton acceptor is the Asp-11. Asp-132 (proton donor) is an active-site residue.

This sequence belongs to the HisA/HisF family.

It localises to the cytoplasm. The enzyme catalyses 1-(5-phospho-beta-D-ribosyl)-5-[(5-phospho-beta-D-ribosylamino)methylideneamino]imidazole-4-carboxamide = 5-[(5-phospho-1-deoxy-D-ribulos-1-ylimino)methylamino]-1-(5-phospho-beta-D-ribosyl)imidazole-4-carboxamide. The protein operates within amino-acid biosynthesis; L-histidine biosynthesis; L-histidine from 5-phospho-alpha-D-ribose 1-diphosphate: step 4/9. This is 1-(5-phosphoribosyl)-5-[(5-phosphoribosylamino)methylideneamino] imidazole-4-carboxamide isomerase from Bacillus pumilus (strain SAFR-032).